Reading from the N-terminus, the 139-residue chain is Small ribosomal subunit protein bS6 (139 aa).

The segment at 97–139 (TEASPMAKAKDERDSRRSSEGERRSAPAEATEEVKETAEKAAE) is disordered. The segment covering 104–139 (KAKDERDSRRSSEGERRSAPAEATEEVKETAEKAAE) has biased composition (basic and acidic residues).

This sequence belongs to the bacterial ribosomal protein bS6 family.

Functionally, binds together with bS18 to 16S ribosomal RNA. This is Small ribosomal subunit protein bS6 from Shewanella sediminis (strain HAW-EB3).